The chain runs to 432 residues: Mitochondrial distribution and morphology protein 12 (432 aa).

Residues 1 to 432 (MSIEVDWRAA…VFPSFWTFLI (432 aa)) enclose the SMP-LTD domain. 2 disordered regions span residues 182–273 (WTDP…PRMR) and 354–377 (QQEA…PKRQ). Over residues 214–234 (TSNPTSRPSTSSTLPSHPSAS) the composition is skewed to low complexity. 2 stretches are compositionally biased toward basic and acidic residues: residues 243 to 253 (TGKEHGSLAED) and 355 to 364 (QEARGQDDRP).

This sequence belongs to the MDM12 family. As to quaternary structure, component of the ER-mitochondria encounter structure (ERMES) or MDM complex, composed of mmm1, mdm10, mdm12 and mdm34. A mmm1 homodimer associates with one molecule of mdm12 on each side in a pairwise head-to-tail manner, and the SMP-LTD domains of mmm1 and mdm12 generate a continuous hydrophobic tunnel for phospholipid trafficking.

The protein localises to the mitochondrion outer membrane. Its subcellular location is the endoplasmic reticulum membrane. Functionally, component of the ERMES/MDM complex, which serves as a molecular tether to connect the endoplasmic reticulum (ER) and mitochondria. Components of this complex are involved in the control of mitochondrial shape and protein biogenesis, and function in nonvesicular lipid trafficking between the ER and mitochondria. Mdm12 is required for the interaction of the ER-resident membrane protein MMM1 and the outer mitochondrial membrane-resident beta-barrel protein mdm10. The mdm12-mmm1 subcomplex functions in the major beta-barrel assembly pathway that is responsible for biogenesis of all mitochondrial outer membrane beta-barrel proteins, and acts in a late step after the SAM complex. The mdm10-mdm12-mmm1 subcomplex further acts in the TOM40-specific pathway after the action of the mdm12-mmm1 complex. Essential for establishing and maintaining the structure of mitochondria and maintenance of mtDNA nucleoids. This chain is Mitochondrial distribution and morphology protein 12, found in Aspergillus flavus (strain ATCC 200026 / FGSC A1120 / IAM 13836 / NRRL 3357 / JCM 12722 / SRRC 167).